Consider the following 424-residue polypeptide: Serine--tRNA ligase (424 aa).

230–232 is a binding site for L-serine; sequence TAE. Position 261–263 (261–263) interacts with ATP; that stretch reads RSE. Glu284 contributes to the L-serine binding site. 348–351 contributes to the ATP binding site; sequence EISS. Ser382 is a binding site for L-serine.

It belongs to the class-II aminoacyl-tRNA synthetase family. Type-1 seryl-tRNA synthetase subfamily. In terms of assembly, homodimer. The tRNA molecule binds across the dimer.

Its subcellular location is the cytoplasm. It catalyses the reaction tRNA(Ser) + L-serine + ATP = L-seryl-tRNA(Ser) + AMP + diphosphate + H(+). It carries out the reaction tRNA(Sec) + L-serine + ATP = L-seryl-tRNA(Sec) + AMP + diphosphate + H(+). Its pathway is aminoacyl-tRNA biosynthesis; selenocysteinyl-tRNA(Sec) biosynthesis; L-seryl-tRNA(Sec) from L-serine and tRNA(Sec): step 1/1. In terms of biological role, catalyzes the attachment of serine to tRNA(Ser). Is also able to aminoacylate tRNA(Sec) with serine, to form the misacylated tRNA L-seryl-tRNA(Sec), which will be further converted into selenocysteinyl-tRNA(Sec). The protein is Serine--tRNA ligase of Solibacter usitatus (strain Ellin6076).